A 194-amino-acid chain; its full sequence is Holliday junction branch migration complex subunit RuvA (194 aa).

Positions 1–64 (MIAYIQGSIT…QDAHTLYGFS (64 aa)) are domain I. Residues 65-143 (TIEEKQCFLQ…KVGNMLSLQP (79 aa)) form a domain II region. Positions 144-150 (SGQEAIY) are flexible linker. The segment at 150 to 194 (YQEALAALSKLGIHKSTAEKTVAAILKEHQGEITVESLIKLALKG) is domain III.

This sequence belongs to the RuvA family. Homotetramer. Forms an RuvA(8)-RuvB(12)-Holliday junction (HJ) complex. HJ DNA is sandwiched between 2 RuvA tetramers; dsDNA enters through RuvA and exits via RuvB. An RuvB hexamer assembles on each DNA strand where it exits the tetramer. Each RuvB hexamer is contacted by two RuvA subunits (via domain III) on 2 adjacent RuvB subunits; this complex drives branch migration. In the full resolvosome a probable DNA-RuvA(4)-RuvB(12)-RuvC(2) complex forms which resolves the HJ.

Its subcellular location is the cytoplasm. Functionally, the RuvA-RuvB-RuvC complex processes Holliday junction (HJ) DNA during genetic recombination and DNA repair, while the RuvA-RuvB complex plays an important role in the rescue of blocked DNA replication forks via replication fork reversal (RFR). RuvA specifically binds to HJ cruciform DNA, conferring on it an open structure. The RuvB hexamer acts as an ATP-dependent pump, pulling dsDNA into and through the RuvAB complex. HJ branch migration allows RuvC to scan DNA until it finds its consensus sequence, where it cleaves and resolves the cruciform DNA. The protein is Holliday junction branch migration complex subunit RuvA of Amoebophilus asiaticus (strain 5a2).